The chain runs to 204 residues: NADH-quinone oxidoreductase subunit C (204 aa).

It belongs to the complex I 30 kDa subunit family. In terms of assembly, NDH-1 is composed of 14 different subunits. Subunits NuoB, C, D, E, F, and G constitute the peripheral sector of the complex.

The protein localises to the cell inner membrane. It carries out the reaction a quinone + NADH + 5 H(+)(in) = a quinol + NAD(+) + 4 H(+)(out). Functionally, NDH-1 shuttles electrons from NADH, via FMN and iron-sulfur (Fe-S) centers, to quinones in the respiratory chain. The immediate electron acceptor for the enzyme in this species is believed to be ubiquinone. Couples the redox reaction to proton translocation (for every two electrons transferred, four hydrogen ions are translocated across the cytoplasmic membrane), and thus conserves the redox energy in a proton gradient. This Rhodopseudomonas palustris (strain ATCC BAA-98 / CGA009) protein is NADH-quinone oxidoreductase subunit C.